A 528-amino-acid chain; its full sequence is Beta-hexosaminidase subunit alpha (528 aa).

The first 22 residues, 1 to 22 (MAGCRLWVSLLLAAALACLATA), serve as a signal peptide directing secretion. The propeptide occupies 23-88 (LWPWPQYIQT…PRPSFSKKQQ (66 aa)). A disulfide bridge links C58 with C104. 3 N-linked (GlcNAc...) asparagine glycosylation sites follow: N115, N157, and N295. The cysteines at positions 277 and 328 are disulfide-linked. Residue E323 is the Proton donor of the active site. The tract at residues 422 to 423 (NR) is critical for hydrolysis GM2 gangliosides. N487 carries an N-linked (GlcNAc...) asparagine glycan. C504 and C521 are joined by a disulfide.

The protein belongs to the glycosyl hydrolase 20 family. There are 3 beta-hexosaminidase isozymes: isozyme A (hexosaminidase A) is a heterodimer composed of one subunit alpha and one subunit beta (chain A and B); isozyme B (hexosaminidase B) is a homodimer of two beta subunits (two chains A and B); isozyme S (hexosaminidase S) is a homodimer of two alpha subunits. The composition of the dimer (isozyme A versus isozyme S) has a significant effect on the substrate specificity of the alpha subunit active site.

It localises to the lysosome. The catalysed reaction is Hydrolysis of terminal non-reducing N-acetyl-D-hexosamine residues in N-acetyl-beta-D-hexosaminides.. It catalyses the reaction N-acetyl-beta-D-galactosaminyl-(1-&gt;4)-beta-D-3-sulfogalactosyl-(1-&gt;4)-beta-D-glucosyl-(1&lt;-&gt;1')-ceramide + H2O = a beta-D-3-sulfogalactosyl-(1-&gt;4)-beta-D-glucosyl-(1&lt;-&gt;1')-ceramide + N-acetyl-beta-D-galactosamine. The enzyme catalyses a ganglioside GM2 (d18:1(4E)) + H2O = a ganglioside GM3 (d18:1(4E)) + N-acetyl-beta-D-galactosamine. It carries out the reaction a ganglioside GM2 + H2O = a ganglioside GM3 + N-acetyl-beta-D-galactosamine. The catalysed reaction is beta-D-GalNAc-(1-&gt;4)-alpha-L-IdoA-(1-&gt;3)-beta-D-GalNAc-4-sulfate-(1-&gt;4)-alpha-L-IdoA-(1-&gt;3)-D-GalNAc-4-sulfate + H2O = alpha-L-IdoA-(1-&gt;3)-beta-D-GalNAc-4-sulfate-(1-&gt;4)-alpha-L-IdoA-(1-&gt;3)-D-GalNAc-4-sulfate + N-acetyl-D-galactosamine. It catalyses the reaction N-acetyl-beta-D-6-sulfogalactosaminyl-(1-&gt;4)-alpha-L-iduronyl-(1-&gt;3)-N-acetyl-D-6-sulfogalactosamine + H2O = alpha-L-iduronyl-(1-&gt;3)-N-acetyl-D-6-sulfogalactosamine + N-acetyl-D-6-sulfogalactosamine. Addition of GM2A stimulates the hydrolysis of sulfated glycosphingolipid SM2 and the ganglioside GM2. Hydrolyzes the non-reducing end N-acetyl-D-hexosamine and/or sulfated N-acetyl-D-hexosamine of glycoconjugates, such as the oligosaccharide moieties from proteins and neutral glycolipids, or from certain mucopolysaccharides. The isozyme S is as active as the isozyme A on the anionic bis-sulfated glycans, the chondroitin-6-sulfate trisaccharide (C6S-3), and the dermatan sulfate pentasaccharide, and the sulfated glycosphingolipid SM2. The isozyme B does not hydrolyze each of these substrates, however hydrolyzes efficiently neutral oligosaccharide. Only the isozyme A is responsible for the degradation of GM2 gangliosides in the presence of GM2A. In Rattus norvegicus (Rat), this protein is Beta-hexosaminidase subunit alpha.